The sequence spans 580 residues: Mitogen-activated protein kinase 12 (580 aa).

A disordered region spans residues 18–38 (RTASGSNQSSNAGEEAASSDL). The segment covering 20–29 (ASGSNQSSNA) has biased composition (polar residues). The Protein kinase domain occupies 87–378 (YQIQEVIGKG…AEEALADPYF (292 aa)). Residues 93-101 (IGKGSYGVV) and lysine 116 contribute to the ATP site. Aspartate 213 functions as the Proton acceptor in the catalytic mechanism. At threonine 249 the chain carries Phosphothreonine. The TXY motif lies at 249-251 (TDY). The residue at position 251 (tyrosine 251) is a Phosphotyrosine. A required for kinase activity and nuclear localization region spans residues 325 to 506 (ARRYLSTMRK…SADSVARTTV (182 aa)). Residues 458-580 (YSKGERGSPL…LSEQVSRMHS (123 aa)) form a disordered region. Residues 502 to 543 (ARTTVSPPMSQDAQQHGSAGQNGVTSTDLSSRSYLKSASISA) are compositionally biased toward polar residues. The span at 554–566 (EPEDDYISEEMEG) shows a compositional bias: acidic residues.

Belongs to the protein kinase superfamily. CMGC Ser/Thr protein kinase family. MAP kinase subfamily. Interacts with EREBP1. In terms of processing, dually phosphorylated on Thr-249 and Tyr-251, which activates the enzyme. Phosphorylated on tyrosine residue.

It localises to the cytoplasm. The protein resides in the nucleus. The catalysed reaction is L-seryl-[protein] + ATP = O-phospho-L-seryl-[protein] + ADP + H(+). It catalyses the reaction L-threonyl-[protein] + ATP = O-phospho-L-threonyl-[protein] + ADP + H(+). Activated by threonine and tyrosine phosphorylation. Activated in response to hydrogen peroxide, salicylic acid, jasmonic acid, ethylene, fungal elicitor and infection with rice blast fungus (M.grisea). In terms of biological role, may be involved in defense signaling pathway. Phosphorylates EREBP1 transcriptional activator in vitro. Enhances DNA-binding activity of EREBP1 to the GCC box element of pathogenesis-related (PR) gene promoters. The protein is Mitogen-activated protein kinase 12 (MPK12) of Oryza sativa subsp. japonica (Rice).